A 113-amino-acid polypeptide reads, in one-letter code: Hydrogenase maturation factor HybF (113 aa).

Ni(2+) is bound by residues His-2 and Glu-3. Cys-73, Cys-76, Cys-89, and Cys-92 together coordinate Zn(2+).

This sequence belongs to the HypA/HybF family. HybF subfamily.

In terms of biological role, involved in the maturation of [NiFe] hydrogenases. Required for nickel insertion into the metal center of the hydrogenase. This chain is Hydrogenase maturation factor HybF, found in Salmonella typhi.